The chain runs to 477 residues: MTRFLLIIILGFLLTACQQVTVDEPEFVPHQLTELRVGTLYGPQIYMTSGQGNSGFDYDMALRFAEYLNVPLKMVPYTNRSELYDALKKNDIDIIAAGMTETPARREQFRLGPPLYRVNQVLVYREGVAAPKDISKLKGRITIIADSAFVETLTQLQKHHPSLVWDQVTDKDSEELLAMIANKEIDYTIADSSSVQINRRYLPDLRSGPVLEEKLDVVWLLPPTHSDALMSQLLAFWHQEKLAGTLDHLNEKYFGHVKRFDYIDTRAFLRAIETVLPRYRQLFETHAGDLDWRKLAATSYQESHWNPHARSPTGVRGMMMLTEPTAKEIGITNRLDAEESIRGGAAYLRDMINRLPESIPESQRMWFALASYNIGYAHVEDARKLAESMELNPNAWRDLKKVLPLLQKRKYYQKTRYGYARGSEAVHYVDSIRRYYDTLVWVDNQSKQPMPEDEQNDLIAEELPSMPAGSLSPDQPK.

A signal peptide spans 1–22; that stretch reads MTRFLLIIILGFLLTACQQVTV. The segment at 23 to 257 is non-LT domain; the sequence is DEPEFVPHQL…HLNEKYFGHV (235 aa). An LT domain region spans residues 258–477; that stretch reads KRFDYIDTRA…AGSLSPDQPK (220 aa). The active site involves E302. Positions 446 to 477 are disordered; it reads SKQPMPEDEQNDLIAEELPSMPAGSLSPDQPK. The span at 451-460 shows a compositional bias: acidic residues; the sequence is PEDEQNDLIA.

In the N-terminal section; belongs to the bacterial solute-binding protein 3 family. The protein in the C-terminal section; belongs to the transglycosylase Slt family.

Its subcellular location is the cell outer membrane. It carries out the reaction Exolytic cleavage of the (1-&gt;4)-beta-glycosidic linkage between N-acetylmuramic acid (MurNAc) and N-acetylglucosamine (GlcNAc) residues in peptidoglycan, from either the reducing or the non-reducing ends of the peptidoglycan chains, with concomitant formation of a 1,6-anhydrobond in the MurNAc residue.. Functionally, murein-degrading enzyme that degrades murein glycan strands and insoluble, high-molecular weight murein sacculi, with the concomitant formation of a 1,6-anhydromuramoyl product. Lytic transglycosylases (LTs) play an integral role in the metabolism of the peptidoglycan (PG) sacculus. Their lytic action creates space within the PG sacculus to allow for its expansion as well as for the insertion of various structures such as secretion systems and flagella. This chain is Membrane-bound lytic murein transglycosylase F, found in Shewanella sp. (strain W3-18-1).